We begin with the raw amino-acid sequence, 102 residues long: Cell division topological specificity factor (102 aa).

Belongs to the MinE family.

In terms of biological role, prevents the cell division inhibition by proteins MinC and MinD at internal division sites while permitting inhibition at polar sites. This ensures cell division at the proper site by restricting the formation of a division septum at the midpoint of the long axis of the cell. This is Cell division topological specificity factor from Synechococcus sp. (strain CC9605).